The chain runs to 309 residues: Homoserine O-succinyltransferase (309 aa).

The active-site Acyl-thioester intermediate is the cysteine 142. Substrate is bound by residues lysine 163 and serine 192. Histidine 235 functions as the Proton acceptor in the catalytic mechanism. Glutamate 237 is a catalytic residue. Arginine 249 contributes to the substrate binding site.

It belongs to the MetA family. Homodimer.

It is found in the cytoplasm. It carries out the reaction L-homoserine + succinyl-CoA = O-succinyl-L-homoserine + CoA. It participates in amino-acid biosynthesis; L-methionine biosynthesis via de novo pathway; O-succinyl-L-homoserine from L-homoserine: step 1/1. Transfers a succinyl group from succinyl-CoA to L-homoserine, forming succinyl-L-homoserine. The protein is Homoserine O-succinyltransferase of Salmonella arizonae (strain ATCC BAA-731 / CDC346-86 / RSK2980).